Reading from the N-terminus, the 533-residue chain is Beta-glucosidase 24 (533 aa).

Positions 1 to 26 (MVLQKLPLMSIGLLWLLIIVGPLVNA) are cleaved as a signal peptide. Position 58 (Q58) interacts with a beta-D-glucoside. N-linked (GlcNAc...) asparagine glycosylation is found at N64 and N88. A beta-D-glucoside is bound by residues H161 and 206–207 (NE). E207 serves as the catalytic Proton donor. C226 and C239 form a disulfide bridge. Y355 is a binding site for a beta-D-glucoside. An N-linked (GlcNAc...) asparagine glycan is attached at N388. A beta-D-glucoside is bound at residue E427. E427 functions as the Nucleophile in the catalytic mechanism. N-linked (GlcNAc...) asparagine glycosylation is found at N437, N442, and N470. Residues W477, 484 to 485 (EW), and F493 each bind a beta-D-glucoside. N-linked (GlcNAc...) asparagine glycosylation occurs at N503. Residues 530-533 (KDEL) carry the Prevents secretion from ER motif.

Belongs to the glycosyl hydrolase 1 family.

The protein resides in the endoplasmic reticulum lumen. The catalysed reaction is Hydrolysis of terminal, non-reducing beta-D-glucosyl residues with release of beta-D-glucose.. The polypeptide is Beta-glucosidase 24 (Arabidopsis thaliana (Mouse-ear cress)).